Here is a 1333-residue protein sequence, read N- to C-terminus: DNA-directed RNA polymerase subunit beta' (1333 aa).

Positions 60, 62, 75, and 78 each coordinate Zn(2+). Positions 535, 537, and 539 each coordinate Mg(2+). Zn(2+)-binding residues include Cys901, Cys983, Cys990, and Cys993.

It belongs to the RNA polymerase beta' chain family. In terms of assembly, the RNAP catalytic core consists of 2 alpha, 1 beta, 1 beta' and 1 omega subunit. When a sigma factor is associated with the core the holoenzyme is formed, which can initiate transcription. It depends on Mg(2+) as a cofactor. Requires Zn(2+) as cofactor.

It carries out the reaction RNA(n) + a ribonucleoside 5'-triphosphate = RNA(n+1) + diphosphate. DNA-dependent RNA polymerase catalyzes the transcription of DNA into RNA using the four ribonucleoside triphosphates as substrates. The protein is DNA-directed RNA polymerase subunit beta' of Corynebacterium efficiens (strain DSM 44549 / YS-314 / AJ 12310 / JCM 11189 / NBRC 100395).